The chain runs to 244 residues: Aspartate/glutamate leucyltransferase (244 aa).

The protein belongs to the R-transferase family. Bpt subfamily.

It is found in the cytoplasm. The catalysed reaction is N-terminal L-glutamyl-[protein] + L-leucyl-tRNA(Leu) = N-terminal L-leucyl-L-glutamyl-[protein] + tRNA(Leu) + H(+). It catalyses the reaction N-terminal L-aspartyl-[protein] + L-leucyl-tRNA(Leu) = N-terminal L-leucyl-L-aspartyl-[protein] + tRNA(Leu) + H(+). Functions in the N-end rule pathway of protein degradation where it conjugates Leu from its aminoacyl-tRNA to the N-termini of proteins containing an N-terminal aspartate or glutamate. This chain is Aspartate/glutamate leucyltransferase, found in Bordetella parapertussis (strain 12822 / ATCC BAA-587 / NCTC 13253).